Here is a 415-residue protein sequence, read N- to C-terminus: Homoserine O-succinyltransferase (415 aa).

One can recognise an AB hydrolase-1 domain in the interval 69–383; the sequence is NAVLVCHALN…PHGHDAFLLD (315 aa). Ser175 serves as the catalytic Nucleophile. Residue Arg245 coordinates substrate. Catalysis depends on residues Asp344 and His377. A substrate-binding site is contributed by Asp378.

Belongs to the AB hydrolase superfamily. MetX family. As to quaternary structure, homodimer.

The protein resides in the cytoplasm. The catalysed reaction is L-homoserine + succinyl-CoA = O-succinyl-L-homoserine + CoA. It participates in amino-acid biosynthesis; L-methionine biosynthesis via de novo pathway; O-succinyl-L-homoserine from L-homoserine: step 1/1. In terms of biological role, transfers a succinyl group from succinyl-CoA to L-homoserine, forming succinyl-L-homoserine. The chain is Homoserine O-succinyltransferase from Bordetella parapertussis (strain 12822 / ATCC BAA-587 / NCTC 13253).